The sequence spans 1390 residues: DNA-directed RNA polymerase subunit beta (1390 aa).

This sequence belongs to the RNA polymerase beta chain family. As to quaternary structure, the RNAP catalytic core consists of 2 alpha, 1 beta, 1 beta' and 1 omega subunit. When a sigma factor is associated with the core the holoenzyme is formed, which can initiate transcription.

It catalyses the reaction RNA(n) + a ribonucleoside 5'-triphosphate = RNA(n+1) + diphosphate. In terms of biological role, DNA-dependent RNA polymerase catalyzes the transcription of DNA into RNA using the four ribonucleoside triphosphates as substrates. The polypeptide is DNA-directed RNA polymerase subunit beta (Rhodopseudomonas palustris (strain HaA2)).